The primary structure comprises 465 residues: Methionine aminopeptidase 2-2 (465 aa).

Positions M1–P13 are enriched in basic and acidic residues. Residues M1 to Q92 are disordered. The segment covering G44–D55 has biased composition (acidic residues). Residues T71–T86 are compositionally biased toward basic residues. Residue H217 participates in substrate binding. A divalent metal cation is bound by residues D238, D249, and H318. Substrate is bound at residue H326. A divalent metal cation contacts are provided by E351 and E446.

This sequence belongs to the peptidase M24A family. Methionine aminopeptidase eukaryotic type 2 subfamily. It depends on Co(2+) as a cofactor. The cofactor is Zn(2+). Mn(2+) serves as cofactor. Requires Fe(2+) as cofactor.

It localises to the cytoplasm. The catalysed reaction is Release of N-terminal amino acids, preferentially methionine, from peptides and arylamides.. In terms of biological role, cotranslationally removes the N-terminal methionine from nascent proteins. The N-terminal methionine is often cleaved when the second residue in the primary sequence is small and uncharged (Met-Ala-, Cys, Gly, Pro, Ser, Thr, or Val). The sequence is that of Methionine aminopeptidase 2-2 from Ajellomyces dermatitidis (strain ER-3 / ATCC MYA-2586) (Blastomyces dermatitidis).